The sequence spans 458 residues: Transcription factor Atf1 (458 aa).

The bZIP domain maps to 347–410 (EEKRRNFLER…VNLKTLLLAH (64 aa)). Residues 349–378 (KRRNFLERNRVAALKCRQRKKQWLANLQNK) are basic motif. Positions 389–403 (LTATVTQLREEIVNL) are leucine-zipper.

It belongs to the bZIP family.

Its subcellular location is the nucleus. Functionally, transcription factor that positively regulates vegetative growth, reproduction, and osmotic stress response. The protein is Transcription factor Atf1 of Penicillium expansum (Blue mold rot fungus).